We begin with the raw amino-acid sequence, 328 residues long: Cytochrome c biogenesis protein CcsA (328 aa).

A run of 8 helical transmembrane segments spans residues 13–33, 46–66, 73–93, 101–121, 146–166, 234–254, 263–283, and 295–315; these read ISFSVVLIVMTIYFLTLLVNL, GIVITFFSITGFLFTRWIYSG, LYESLIFLSWAFSIIHMVSYF, LNAITAPSAIFIQGFATSGLL, MVLGYGALLCGSLLSIALLVI, IISLGFLFLTMGILSGAVWAN, WDPKETWAFITWTIFAIYLHI, and AIVASIGFLVIWICYFGVNLL.

The protein belongs to the CcmF/CycK/Ccl1/NrfE/CcsA family. As to quaternary structure, may interact with Ccs1.

The protein localises to the plastid. Its subcellular location is the chloroplast thylakoid membrane. Its function is as follows. Required during biogenesis of c-type cytochromes (cytochrome c6 and cytochrome f) at the step of heme attachment. The protein is Cytochrome c biogenesis protein CcsA of Aethionema cordifolium (Lebanon stonecress).